The primary structure comprises 327 residues: Phenylalanine--tRNA ligase alpha subunit (327 aa).

E252 provides a ligand contact to Mg(2+).

Belongs to the class-II aminoacyl-tRNA synthetase family. Phe-tRNA synthetase alpha subunit type 1 subfamily. Tetramer of two alpha and two beta subunits. Mg(2+) serves as cofactor.

The protein localises to the cytoplasm. It carries out the reaction tRNA(Phe) + L-phenylalanine + ATP = L-phenylalanyl-tRNA(Phe) + AMP + diphosphate + H(+). The chain is Phenylalanine--tRNA ligase alpha subunit from Photorhabdus laumondii subsp. laumondii (strain DSM 15139 / CIP 105565 / TT01) (Photorhabdus luminescens subsp. laumondii).